The sequence spans 163 residues: Probable chemoreceptor glutamine deamidase CheD (163 aa).

This sequence belongs to the CheD family.

It catalyses the reaction L-glutaminyl-[protein] + H2O = L-glutamyl-[protein] + NH4(+). In terms of biological role, probably deamidates glutamine residues to glutamate on methyl-accepting chemotaxis receptors (MCPs), playing an important role in chemotaxis. This chain is Probable chemoreceptor glutamine deamidase CheD, found in Borrelia garinii subsp. bavariensis (strain ATCC BAA-2496 / DSM 23469 / PBi) (Borreliella bavariensis).